The primary structure comprises 437 residues: Trigger factor (437 aa).

Positions 163-248 (SDRVIIDFEG…LNNVSEATLP (86 aa)) constitute a PPIase FKBP-type domain.

The protein belongs to the FKBP-type PPIase family. Tig subfamily.

Its subcellular location is the cytoplasm. It carries out the reaction [protein]-peptidylproline (omega=180) = [protein]-peptidylproline (omega=0). Its function is as follows. Involved in protein export. Acts as a chaperone by maintaining the newly synthesized protein in an open conformation. Functions as a peptidyl-prolyl cis-trans isomerase. The protein is Trigger factor of Neisseria meningitidis serogroup C / serotype 2a (strain ATCC 700532 / DSM 15464 / FAM18).